Consider the following 705-residue polypeptide: Zinc finger protein 770 (705 aa).

Lysine 16 participates in a covalent cross-link: Glycyl lysine isopeptide (Lys-Gly) (interchain with G-Cter in SUMO2). C2H2-type zinc fingers lie at residues 31–53, 59–81, and 85–107; these read YICN…YLIH, FECD…QLTH, and FSCN…QQLH. Glycyl lysine isopeptide (Lys-Gly) (interchain with G-Cter in SUMO2) cross-links involve residues lysine 116, lysine 124, and lysine 149. C2H2-type zinc fingers lie at residues 164–186, 192–214, and 220–242; these read HACT…SLIH, FKCV…QLTH, and FQCC…KQIH. Residue lysine 266 forms a Glycyl lysine isopeptide (Lys-Gly) (interchain with G-Cter in SUMO2) linkage. The C2H2-type 7; degenerate zinc-finger motif lies at 298-322; sequence FQCSECEECFESEQILNGHKCLPAR. 4 C2H2-type zinc fingers span residues 485 to 507, 513 to 535, 640 to 662, and 668 to 690; these read CPCD…YLIH, FDCN…KLTH, YQCS…YLIH, and FECS…QLTH. Lysine 698 is covalently cross-linked (Glycyl lysine isopeptide (Lys-Gly) (interchain with G-Cter in SUMO2)).

The protein belongs to the krueppel C2H2-type zinc-finger protein family.

It is found in the nucleus. May be involved in transcriptional regulation. In Mus musculus (Mouse), this protein is Zinc finger protein 770 (Znf770).